The following is a 297-amino-acid chain: Carbamate kinase (297 aa).

It belongs to the carbamate kinase family.

The protein localises to the cytoplasm. The enzyme catalyses hydrogencarbonate + NH4(+) + ATP = carbamoyl phosphate + ADP + H2O + H(+). It carries out the reaction carbamate + ATP = carbamoyl phosphate + ADP. It catalyses the reaction hydrogencarbonate + NH4(+) = carbamate + H2O + H(+). Its pathway is nitrogen metabolism; (S)-allantoin degradation. Kinase involved in the anaerobic nitrogen utilization via the assimilation of allantoin. Catalyzes the transfer of a phosphate group from carbamoyl phosphate to ADP to produce ATP and leave carbamate, which spontaneously hydrolyzes to ammonia and hydrogencarbonate. In Escherichia coli O6:H1 (strain CFT073 / ATCC 700928 / UPEC), this protein is Carbamate kinase.